A 1192-amino-acid polypeptide reads, in one-letter code: Probable phospholipid-transporting ATPase IM (1192 aa).

The Cytoplasmic portion of the chain corresponds to 1–44 (MFCSEKKLREVERIVKANDREYNEKFQYADNRIHTSKYNILTFL). A helical membrane pass occupies residues 45 to 66 (PINLFEQFQRVANAYFLCLLIL). Residues 67-72 (QLIPEI) lie on the Exoplasmic loop side of the membrane. A helical membrane pass occupies residues 73–92 (SSLTWFTTIVPLVLVITMTA). Residues 93-276 (VKDATDDYFR…TSIDRLMNTL (184 aa)) lie on the Cytoplasmic side of the membrane. The chain crosses the membrane as a helical span at residues 277–298 (VLWIFGFLICLGIILAIGNSIW). The Exoplasmic loop segment spans residues 299–327 (ESQTGDQFRTFLFWNEGEKSSVFSGFLTF). A helical membrane pass occupies residues 328-349 (WSYIIILNTVVPISLYVSVEVI). The Cytoplasmic portion of the chain corresponds to 350 to 871 (RLGHSYFINW…GRWSYFRMCK (522 aa)). Catalysis depends on aspartate 392, which acts as the 4-aspartylphosphate intermediate. Residues aspartate 392, lysine 393, threonine 394, glutamate 496, phenylalanine 537, lysine 560, arginine 594, threonine 674, glycine 675, aspartate 676, arginine 789, and lysine 795 each contribute to the ATP site. Aspartate 392 is a binding site for Mg(2+). Threonine 394 contributes to the Mg(2+) binding site. Aspartate 815 provides a ligand contact to Mg(2+). Positions 818 and 819 each coordinate ATP. Aspartate 819 provides a ligand contact to Mg(2+). The helical transmembrane segment at 872–892 (FLCYFFYKNFAFTLVHFWFGF) threads the bilayer. The Exoplasmic loop portion of the chain corresponds to 893 to 904 (FCGFSAQTVYDQ). A helical transmembrane segment spans residues 905–924 (WFITLFNIVYTSLPVLAMGI). The Cytoplasmic portion of the chain corresponds to 925-954 (FDQDVSDQNSVDCPQLYKPGQLNLLFNKRK). Residues 955–976 (FFICVLHGIYTSLVLFFIPYGA) form a helical membrane-spanning segment. The Exoplasmic loop segment spans residues 977–990 (FYNVAGEDGQHIAD). Residues 991-1013 (YQSFAVTMATSLVIVVSVQIALD) form a helical membrane-spanning segment. The Cytoplasmic segment spans residues 1014–1019 (TSYWTF). The chain crosses the membrane as a helical span at residues 1020–1040 (INHVFIWGSIAIYFSILFTMH). Residues 1041-1060 (SNGIFGIFPNQFPFVGNARH) are Exoplasmic loop-facing. Residues 1061 to 1085 (SLTQKCIWLVILLTTVASVMPVVAF) traverse the membrane as a helical segment. The Cytoplasmic portion of the chain corresponds to 1086–1192 (RFLKVDLYPT…SFSQDKTVKL (107 aa)). Positions 1104–1125 (QKAQKKARPPSSRRPRTRRSSS) are enriched in basic residues. 2 disordered regions span residues 1104-1130 (QKAQ…RSGY) and 1143-1163 (TSGK…EKTH).

The protein belongs to the cation transport ATPase (P-type) (TC 3.A.3) family. Type IV subfamily. As to quaternary structure, component of a P4-ATPase flippase complex which consists of a catalytic alpha subunit and an accessory beta subunit. Interacts with beta subunits TMEM30A and TMEM30B. Mg(2+) is required as a cofactor. In terms of tissue distribution, ubiquitously expressed at moderate levels.

It localises to the cell membrane. The protein resides in the golgi apparatus. The enzyme catalyses ATP + H2O + phospholipidSide 1 = ADP + phosphate + phospholipidSide 2.. Functionally, component of a P4-ATPase flippase complex which catalyzes the hydrolysis of ATP coupled to the transport of aminophospholipids from the outer to the inner leaflet of various membranes and ensures the maintenance of asymmetric distribution of phospholipids. Phospholipid translocation also seems to be implicated in vesicle formation and in uptake of lipid signaling molecules. This Homo sapiens (Human) protein is Probable phospholipid-transporting ATPase IM (ATP8B4).